Here is a 273-residue protein sequence, read N- to C-terminus: Bidirectional sugar transporter SWEET1a (273 aa).

Topologically, residues M1–R6 are extracellular. A helical membrane pass occupies residues F7–T27. The MtN3/slv 1 domain maps to F7–K95. The Cytoplasmic segment spans residues F28–G42. Residues V43–V63 form a helical membrane-spanning segment. At S64–T71 the chain is on the extracellular side. A helical transmembrane segment spans residues T72–A92. Residues E93 to M101 lie on the Cytoplasmic side of the membrane. The chain crosses the membrane as a helical span at residues G102–L122. Over H123–K128 the chain is Extracellular. Residues L129–I149 form a helical membrane-spanning segment. Residues C131–K214 form the MtN3/slv 2 domain. The Cytoplasmic portion of the chain corresponds to M150–P163. Residues F164 to G184 traverse the membrane as a helical segment. Residues R185–F188 lie on the Extracellular side of the membrane. Residues I189–I209 traverse the membrane as a helical segment. Over Y210–V273 the chain is Cytoplasmic.

This sequence belongs to the SWEET sugar transporter family. As to quaternary structure, forms homooligomers and/or heterooligomers.

The protein localises to the cell membrane. Mediates both low-affinity uptake and efflux of sugar across the plasma membrane. The protein is Bidirectional sugar transporter SWEET1a (SWEET1A) of Oryza sativa subsp. japonica (Rice).